The chain runs to 216 residues: Large ribosomal subunit protein uL3 (216 aa).

The disordered stretch occupies residues Gly-137 to Pro-158.

The protein belongs to the universal ribosomal protein uL3 family. In terms of assembly, part of the 50S ribosomal subunit. Forms a cluster with proteins L14 and L19.

Its function is as follows. One of the primary rRNA binding proteins, it binds directly near the 3'-end of the 23S rRNA, where it nucleates assembly of the 50S subunit. In Arthrobacter sp. (strain FB24), this protein is Large ribosomal subunit protein uL3.